A 56-amino-acid chain; its full sequence is Ferredoxin (56 aa).

4Fe-4S ferredoxin-type domains follow at residues 2–28 and 29–56; these read AYKIADSCVSCGACASECPVNAISQGD and SIFVIDADTCIDCGNCANVCPVGAPVQE. [4Fe-4S] cluster contacts are provided by Cys9, Cys12, Cys15, Cys19, Cys38, Cys41, Cys44, and Cys48.

Requires [4Fe-4S] cluster as cofactor.

In terms of biological role, ferredoxins are iron-sulfur proteins that transfer electrons in a wide variety of metabolic reactions. The polypeptide is Ferredoxin (Clostridium pasteurianum).